A 362-amino-acid polypeptide reads, in one-letter code: Chalcone synthase A (362 aa).

Residue C168 is part of the active site.

Belongs to the thiolase-like superfamily. Chalcone/stilbene synthases family.

The enzyme catalyses (E)-4-coumaroyl-CoA + 3 malonyl-CoA + 3 H(+) = 2',4,4',6'-tetrahydroxychalcone + 3 CO2 + 4 CoA. It participates in secondary metabolite biosynthesis; flavonoid biosynthesis. Its function is as follows. The primary product of this enzyme is 4,2',4',6'-tetrahydroxychalcone (also termed naringenin-chalcone or chalcone) which can under specific conditions spontaneously isomerize into naringenin. The polypeptide is Chalcone synthase A (CHSA) (Ipomoea platensis (Morning glory)).